Here is a 177-residue protein sequence, read N- to C-terminus: Large ribosomal subunit protein uL10 (177 aa).

It belongs to the universal ribosomal protein uL10 family. As to quaternary structure, part of the ribosomal stalk of the 50S ribosomal subunit. The N-terminus interacts with L11 and the large rRNA to form the base of the stalk. The C-terminus forms an elongated spine to which L12 dimers bind in a sequential fashion forming a multimeric L10(L12)X complex.

Forms part of the ribosomal stalk, playing a central role in the interaction of the ribosome with GTP-bound translation factors. This Thermoanaerobacter sp. (strain X514) protein is Large ribosomal subunit protein uL10.